Reading from the N-terminus, the 356-residue chain is Protein RecA (356 aa).

An ATP-binding site is contributed by 68-75; the sequence is GQESSGKT.

The protein belongs to the RecA family.

The protein resides in the cytoplasm. Functionally, can catalyze the hydrolysis of ATP in the presence of single-stranded DNA, the ATP-dependent uptake of single-stranded DNA by duplex DNA, and the ATP-dependent hybridization of homologous single-stranded DNAs. It interacts with LexA causing its activation and leading to its autocatalytic cleavage. The protein is Protein RecA of Thermotoga petrophila (strain ATCC BAA-488 / DSM 13995 / JCM 10881 / RKU-1).